Reading from the N-terminus, the 317-residue chain is Peroxidase 22.3 (317 aa).

The signal sequence occupies residues 1 to 25; the sequence is MASATNSSLSLMLLVAAAMASVASA. Glutamine 26 is subject to Pyrrolidone carboxylic acid. Intrachain disulfides connect cysteine 36/cysteine 111 and cysteine 69/cysteine 74. The active-site Proton acceptor is histidine 67. Residues aspartate 68, valine 71, glycine 73, aspartate 75, and serine 77 each contribute to the Ca(2+) site. N-linked (GlcNAc...) asparagine glycosylation occurs at asparagine 112. Disulfide bonds link cysteine 117/cysteine 312 and cysteine 196/cysteine 221. Proline 159 provides a ligand contact to substrate. An N-linked (GlcNAc...) asparagine glycan is attached at asparagine 171. Histidine 189 is a heme b binding site. Position 190 (threonine 190) interacts with Ca(2+). N-linked (GlcNAc...) asparagine glycosylation is present at asparagine 205. Residues aspartate 236, threonine 239, and aspartate 244 each contribute to the Ca(2+) site.

This sequence belongs to the peroxidase family. Classical plant (class III) peroxidase subfamily. The cofactor is heme b. Requires Ca(2+) as cofactor.

Its subcellular location is the secreted. The enzyme catalyses H2O2 + AH2 = A + 2 H2O. In terms of biological role, removal of H(2)O(2), oxidation of toxic reductants, biosynthesis and degradation of lignin, suberization, auxin catabolism, response to environmental stresses such as wounding, pathogen attack and oxidative stress. These functions might be dependent on each isozyme/isoform in each plant tissue. The protein is Peroxidase 22.3 of Oryza sativa subsp. japonica (Rice).